The following is a 156-amino-acid chain: Sec-independent protein translocase protein TatB (156 aa).

A helical membrane pass occupies residues 2 to 22 (FSSVGWGEIFLLVVVGLVVIG). The disordered stretch occupies residues 100 to 156 (KIMAEGTEGEAQRNKQAADNNANVVERPADGSTARPTQNDPKDGPNYSGGVSWTDII). The segment covering 113–122 (NKQAADNNAN) has biased composition (polar residues).

This sequence belongs to the TatB family. In terms of assembly, the Tat system comprises two distinct complexes: a TatABC complex, containing multiple copies of TatA, TatB and TatC subunits, and a separate TatA complex, containing only TatA subunits. Substrates initially bind to the TatABC complex, which probably triggers association of the separate TatA complex to form the active translocon.

The protein localises to the cell membrane. Its function is as follows. Part of the twin-arginine translocation (Tat) system that transports large folded proteins containing a characteristic twin-arginine motif in their signal peptide across membranes. Together with TatC, TatB is part of a receptor directly interacting with Tat signal peptides. TatB may form an oligomeric binding site that transiently accommodates folded Tat precursor proteins before their translocation. The sequence is that of Sec-independent protein translocase protein TatB from Corynebacterium glutamicum (strain ATCC 13032 / DSM 20300 / JCM 1318 / BCRC 11384 / CCUG 27702 / LMG 3730 / NBRC 12168 / NCIMB 10025 / NRRL B-2784 / 534).